We begin with the raw amino-acid sequence, 382 residues long: Rubredoxin-NAD(+) reductase (382 aa).

FAD-binding positions include 9 to 12 (TGLA), 33 to 34 (TA), K42, V80, E156, D275, V287, and K318.

The protein belongs to the FAD-dependent oxidoreductase family. In terms of assembly, homodimer. Requires FAD as cofactor.

Its subcellular location is the cytoplasm. It carries out the reaction 2 reduced [rubredoxin] + NAD(+) + H(+) = 2 oxidized [rubredoxin] + NADH. The protein operates within hydrocarbon metabolism; alkane degradation. Functionally, involved in the hydrocarbon hydroxylating system, which transfers electrons from NADH to rubredoxin reductase and then through rubredoxin to alkane 1 monooxygenase. This chain is Rubredoxin-NAD(+) reductase (rubB), found in Alcanivorax borkumensis (strain ATCC 700651 / DSM 11573 / NCIMB 13689 / SK2).